The sequence spans 811 residues: Glycerol-3-phosphate acyltransferase (811 aa).

The HXXXXD motif motif lies at 309–314 (HRSHMD).

This sequence belongs to the GPAT/DAPAT family.

The protein resides in the cell inner membrane. It carries out the reaction sn-glycerol 3-phosphate + an acyl-CoA = a 1-acyl-sn-glycero-3-phosphate + CoA. The protein operates within phospholipid metabolism; CDP-diacylglycerol biosynthesis; CDP-diacylglycerol from sn-glycerol 3-phosphate: step 1/3. This is Glycerol-3-phosphate acyltransferase (plsB) from Vibrio cholerae serotype O1 (strain ATCC 39315 / El Tor Inaba N16961).